A 234-amino-acid chain; its full sequence is Demethylmenaquinone methyltransferase (234 aa).

Residues T62, D80, 100 to 101 (DA), and S117 each bind S-adenosyl-L-methionine.

It belongs to the class I-like SAM-binding methyltransferase superfamily. MenG/UbiE family.

It catalyses the reaction a 2-demethylmenaquinol + S-adenosyl-L-methionine = a menaquinol + S-adenosyl-L-homocysteine + H(+). Its pathway is quinol/quinone metabolism; menaquinone biosynthesis; menaquinol from 1,4-dihydroxy-2-naphthoate: step 2/2. Functionally, methyltransferase required for the conversion of demethylmenaquinol (DMKH2) to menaquinol (MKH2). The chain is Demethylmenaquinone methyltransferase from Mycobacterium bovis (strain ATCC BAA-935 / AF2122/97).